Reading from the N-terminus, the 184-residue chain is Ribosome-recycling factor (184 aa).

It belongs to the RRF family.

The protein localises to the cytoplasm. Responsible for the release of ribosomes from messenger RNA at the termination of protein biosynthesis. May increase the efficiency of translation by recycling ribosomes from one round of translation to another. The chain is Ribosome-recycling factor from Clostridium botulinum (strain ATCC 19397 / Type A).